A 466-amino-acid chain; its full sequence is 23S rRNA (uracil(1939)-C(5))-methyltransferase RlmD (466 aa).

The TRAM domain occupies 1-54 (MVDVLNIESLDLEARGIAHRDGKVLFVEGALPGERVTVQTVRRKPSYEIAKVEE). Positions 67, 73, 76, and 155 each coordinate [4Fe-4S] cluster. S-adenosyl-L-methionine is bound by residues glutamine 264, phenylalanine 293, asparagine 298, glutamate 314, asparagine 342, and aspartate 363. Cysteine 393 (nucleophile) is an active-site residue.

The protein belongs to the class I-like SAM-binding methyltransferase superfamily. RNA M5U methyltransferase family. RlmD subfamily.

It catalyses the reaction uridine(1939) in 23S rRNA + S-adenosyl-L-methionine = 5-methyluridine(1939) in 23S rRNA + S-adenosyl-L-homocysteine + H(+). Catalyzes the formation of 5-methyl-uridine at position 1939 (m5U1939) in 23S rRNA. The sequence is that of 23S rRNA (uracil(1939)-C(5))-methyltransferase RlmD from Bordetella pertussis (strain Tohama I / ATCC BAA-589 / NCTC 13251).